Here is a 604-residue protein sequence, read N- to C-terminus: UvrABC system protein C (604 aa).

Residues 10–89 (ELPGVYLMKD…VKKNRPHYNI (80 aa)) form the GIY-YIG domain. Residues 199 to 234 (SGTIKELQEKMNIHAIAQEYESAAVIRDQIDALKSL) form the UVR domain.

Belongs to the UvrC family. Interacts with UvrB in an incision complex.

Its subcellular location is the cytoplasm. Its function is as follows. The UvrABC repair system catalyzes the recognition and processing of DNA lesions. UvrC both incises the 5' and 3' sides of the lesion. The N-terminal half is responsible for the 3' incision and the C-terminal half is responsible for the 5' incision. In Methanococcoides burtonii (strain DSM 6242 / NBRC 107633 / OCM 468 / ACE-M), this protein is UvrABC system protein C.